Consider the following 465-residue polypeptide: Asparagine--tRNA ligase (465 aa).

This sequence belongs to the class-II aminoacyl-tRNA synthetase family. As to quaternary structure, homodimer.

The protein resides in the cytoplasm. The enzyme catalyses tRNA(Asn) + L-asparagine + ATP = L-asparaginyl-tRNA(Asn) + AMP + diphosphate + H(+). The polypeptide is Asparagine--tRNA ligase (Pseudoalteromonas atlantica (strain T6c / ATCC BAA-1087)).